We begin with the raw amino-acid sequence, 54 residues long: Kazal-type inhibitor-like protein (54 aa).

One can recognise a Kazal-like domain in the interval 1–54 (MKVNCKGYPTKFCFGKPLPHCASDGKTYPNRCRFCNAFVKSHGLITLRYYGKCK). 3 cysteine pairs are disulfide-bonded: C5–C35, C13–C32, and C21–C53.

As to quaternary structure, may form disulfide-linked dimers or trimers (in vitro). Expressed by the venom gland.

It localises to the secreted. Its function is as follows. Partially inhibits trypsin in vitro at slightly acidic pH and concentrations in excess of 0.3 mM. Has no protease inhibitory activity at neutral or basic pH. Has no antibacterial activity. Shows no toxicity in vertebrates apart from transient paw edema in mouse. The protein is Kazal-type inhibitor-like protein of Bothriechis schlegelii (Eyelash palm pitviper).